Reading from the N-terminus, the 408-residue chain is Tyrosine--tRNA ligase (408 aa).

Position 35 (Tyr35) interacts with L-tyrosine. Residues 40 to 49 (PTADSLHVGH) carry the 'HIGH' region motif. 2 residues coordinate L-tyrosine: Tyr168 and Gln172. Residues 228–232 (KMGKT) carry the 'KMSKS' region motif. Residue Lys231 participates in ATP binding. The S4 RNA-binding domain occupies 342 to 407 (INIIDLLLKT…GKKTYHRVKL (66 aa)).

This sequence belongs to the class-I aminoacyl-tRNA synthetase family. TyrS type 1 subfamily. As to quaternary structure, homodimer.

The protein resides in the cytoplasm. The enzyme catalyses tRNA(Tyr) + L-tyrosine + ATP = L-tyrosyl-tRNA(Tyr) + AMP + diphosphate + H(+). In terms of biological role, catalyzes the attachment of tyrosine to tRNA(Tyr) in a two-step reaction: tyrosine is first activated by ATP to form Tyr-AMP and then transferred to the acceptor end of tRNA(Tyr). This chain is Tyrosine--tRNA ligase, found in Acetivibrio thermocellus (strain ATCC 27405 / DSM 1237 / JCM 9322 / NBRC 103400 / NCIMB 10682 / NRRL B-4536 / VPI 7372) (Clostridium thermocellum).